The primary structure comprises 352 residues: Holliday junction branch migration complex subunit RuvB (352 aa).

The segment at 4 to 185 is large ATPase domain (RuvB-L); sequence ADRLIAATGP…FGIVQRLEFY (182 aa). Residues I24, R25, G66, K69, T70, T71, 132-134, R175, Y185, and R222 contribute to the ATP site; that span reads EDF. T70 serves as a coordination point for Mg(2+). Residues 186-256 form a small ATPAse domain (RuvB-S) region; sequence STADLATIVS…IADLALNLLD (71 aa). Positions 259-352 are head domain (RuvB-H); that stretch reads ERGFDHQDRR…VDEFLDAVDD (94 aa). Residues R295, R314, and R319 each contribute to the DNA site.

Belongs to the RuvB family. Homohexamer. Forms an RuvA(8)-RuvB(12)-Holliday junction (HJ) complex. HJ DNA is sandwiched between 2 RuvA tetramers; dsDNA enters through RuvA and exits via RuvB. An RuvB hexamer assembles on each DNA strand where it exits the tetramer. Each RuvB hexamer is contacted by two RuvA subunits (via domain III) on 2 adjacent RuvB subunits; this complex drives branch migration. In the full resolvosome a probable DNA-RuvA(4)-RuvB(12)-RuvC(2) complex forms which resolves the HJ.

Its subcellular location is the cytoplasm. The catalysed reaction is ATP + H2O = ADP + phosphate + H(+). In terms of biological role, the RuvA-RuvB-RuvC complex processes Holliday junction (HJ) DNA during genetic recombination and DNA repair, while the RuvA-RuvB complex plays an important role in the rescue of blocked DNA replication forks via replication fork reversal (RFR). RuvA specifically binds to HJ cruciform DNA, conferring on it an open structure. The RuvB hexamer acts as an ATP-dependent pump, pulling dsDNA into and through the RuvAB complex. RuvB forms 2 homohexamers on either side of HJ DNA bound by 1 or 2 RuvA tetramers; 4 subunits per hexamer contact DNA at a time. Coordinated motions by a converter formed by DNA-disengaged RuvB subunits stimulates ATP hydrolysis and nucleotide exchange. Immobilization of the converter enables RuvB to convert the ATP-contained energy into a lever motion, pulling 2 nucleotides of DNA out of the RuvA tetramer per ATP hydrolyzed, thus driving DNA branch migration. The RuvB motors rotate together with the DNA substrate, which together with the progressing nucleotide cycle form the mechanistic basis for DNA recombination by continuous HJ branch migration. Branch migration allows RuvC to scan DNA until it finds its consensus sequence, where it cleaves and resolves cruciform DNA. The protein is Holliday junction branch migration complex subunit RuvB of Pseudomonas fluorescens (strain ATCC BAA-477 / NRRL B-23932 / Pf-5).